A 137-amino-acid polypeptide reads, in one-letter code: Probable 4-amino-4-deoxy-L-arabinose-phosphoundecaprenol flippase subunit ArnF (137 aa).

Residues 1–5 (MSRAR) are Cytoplasmic-facing. Residues 6 to 26 (GFAFALGSVALVSGAQLGMRW) traverse the membrane as a helical segment. The Periplasmic portion of the chain corresponds to 27 to 49 (SMTRLPAPDQWLPALSAGSVDLA). A helical transmembrane segment spans residues 50-70 (ALAVVAAAIAAYALSMLCWLL). The Cytoplasmic portion of the chain corresponds to 71-80 (ALRDLPLGRA). A helical membrane pass occupies residues 81 to 101 (YSLLSISYALVYLLAASLPLF). A topological domain (periplasmic) is located at residue Asn-102. Residues 103–123 (EPFTLSKTLGVALVILGVITI) traverse the membrane as a helical segment. At 124–137 (NSRSAPATSPRNTP) the chain is on the cytoplasmic side.

Belongs to the ArnF family. In terms of assembly, heterodimer of ArnE and ArnF.

It localises to the cell inner membrane. The protein operates within bacterial outer membrane biogenesis; lipopolysaccharide biosynthesis. Translocates 4-amino-4-deoxy-L-arabinose-phosphoundecaprenol (alpha-L-Ara4N-phosphoundecaprenol) from the cytoplasmic to the periplasmic side of the inner membrane. This Pseudomonas fluorescens (strain ATCC BAA-477 / NRRL B-23932 / Pf-5) protein is Probable 4-amino-4-deoxy-L-arabinose-phosphoundecaprenol flippase subunit ArnF.